The following is a 167-amino-acid chain: Neutrophilic granule protein (167 aa).

The signal sequence occupies residues 1–21; that stretch reads MAGLWKTFVLVVALAVVSCEA. The interval 122 to 141 is disordered; it reads EDTQETSFNDKQDVSEKEKF.

It belongs to the cathelicidin family. As to quaternary structure, monomer. Homodimer; disulfide-linked. In terms of tissue distribution, expressed in myeloid bone marrow cells. Expressed in neutrophilic precursors (at protein level). Expressed in myeloid bone marrow cells.

The protein resides in the secreted. It is found in the cytoplasmic granule. Its function is as follows. Acts as an inhibitor of cathepsin B (CTSB) activity. Plays a role as a negative regulator of tumor vascular development, cell invasion and metastasis. This Mus musculus (Mouse) protein is Neutrophilic granule protein.